We begin with the raw amino-acid sequence, 483 residues long: Altronate oxidoreductase (483 aa).

An NAD(+)-binding site is contributed by Ile-18–Ala-29.

This sequence belongs to the mannitol dehydrogenase family. UxaB subfamily.

The enzyme catalyses D-altronate + NAD(+) = keto-D-tagaturonate + NADH + H(+). It participates in carbohydrate metabolism; pentose and glucuronate interconversion. The sequence is that of Altronate oxidoreductase from Klebsiella pneumoniae subsp. pneumoniae (strain ATCC 700721 / MGH 78578).